The chain runs to 811 residues: Potassium transporter 27 (811 aa).

Over 1-64 (MGDDVLGRGS…QEESWARTLK (64 aa)) the chain is Cytoplasmic. A helical membrane pass occupies residues 65–85 (LAFQCVGILYGDIGTSPLFVY). Over 86 to 102 (SSTFKDGVRHPDDLLGA) the chain is Extracellular. Residues 103 to 123 (LSLIIYSFALFTIVKYVFIAL) traverse the membrane as a helical segment. The Cytoplasmic segment spans residues 124-188 (RANDDGDGGT…ELLETNRAVK (65 aa)). A helical membrane pass occupies residues 189–209 (IWLFLLTILATAMVISDAVLT). The Extracellular segment spans residues 210–226 (PAISVLSAVGGLKEKAP). The chain crosses the membrane as a helical span at residues 227–247 (NLTTDEIVWITVATLVVLFAI). Residues 248–254 (QRFGTDK) lie on the Cytoplasmic side of the membrane. Residues 255–275 (IGYLFAPIILLWLLLIGCVGI) form a helical membrane-spanning segment. The Extracellular segment spans residues 276-310 (YNTIKFDTGVLRAFNLKYIIDYFRRNKKDGWISLS). The helical transmembrane segment at 311–331 (GILLCFTGTEALFSDLGYFSI) threads the bilayer. Residues 332 to 335 (RSIQ) lie on the Cytoplasmic side of the membrane. Residues 336–356 (LSFSFGLVPSVLLAYIGQAAY) traverse the membrane as a helical segment. Over 357 to 375 (LREHPEHIANTFYRSTPNV) the chain is Extracellular. A helical membrane pass occupies residues 376–396 (MFWPTFILAVAASIIGSQAMI). Residues 397 to 434 (SCAFATISHLQTLNCFPRVKILHTSRQYSGQLYIPEVN) are Cytoplasmic-facing. The helical transmembrane segment at 435–455 (FLLCVGACLVTIGFKTTVIIG) threads the bilayer. Over 456-459 (EAHA) the chain is Extracellular. Residues 460 to 480 (ICVVFVMIITTLLLTIVMLLV) form a helical membrane-spanning segment. The Cytoplasmic portion of the chain corresponds to 481 to 482 (WK). Residues 483 to 503 (VSIWYVALFFIVFMSSESIYL) traverse the membrane as a helical segment. At 504-515 (SAVLYQFVHGEY) the chain is on the extracellular side. The helical transmembrane segment at 516–536 (VPVAMSVFLMIVMTVWHYVHV) threads the bilayer. At 537 to 811 (KRYEFELEHT…VLKVGIAYEI (275 aa)) the chain is on the cytoplasmic side.

It belongs to the HAK/KUP transporter (TC 2.A.72.3) family.

It is found in the membrane. High-affinity potassium transporter. This is Potassium transporter 27 (HAK27) from Oryza sativa subsp. japonica (Rice).